The primary structure comprises 440 residues: tRNA-2-methylthio-N(6)-dimethylallyladenosine synthase (440 aa).

An MTTase N-terminal domain is found at 2-117; the sequence is KGLYIKTYGC…LPELIVKASR (116 aa). Residues C11, C47, C80, C157, C161, and C164 each coordinate [4Fe-4S] cluster. The Radical SAM core domain occupies 143–374; that stretch reads NSQGSSAFLA…QELISKQQLE (232 aa). Positions 377-440 constitute a TRAM domain; the sequence is QSMIGKTIPV…RQNSLLGCAA (64 aa).

This sequence belongs to the methylthiotransferase family. MiaB subfamily. As to quaternary structure, monomer. [4Fe-4S] cluster serves as cofactor.

It localises to the cytoplasm. The catalysed reaction is N(6)-dimethylallyladenosine(37) in tRNA + (sulfur carrier)-SH + AH2 + 2 S-adenosyl-L-methionine = 2-methylsulfanyl-N(6)-dimethylallyladenosine(37) in tRNA + (sulfur carrier)-H + 5'-deoxyadenosine + L-methionine + A + S-adenosyl-L-homocysteine + 2 H(+). Functionally, catalyzes the methylthiolation of N6-(dimethylallyl)adenosine (i(6)A), leading to the formation of 2-methylthio-N6-(dimethylallyl)adenosine (ms(2)i(6)A) at position 37 in tRNAs that read codons beginning with uridine. This chain is tRNA-2-methylthio-N(6)-dimethylallyladenosine synthase, found in Wolbachia pipientis subsp. Culex pipiens (strain wPip).